Reading from the N-terminus, the 227-residue chain is Protein GET1 (227 aa).

Topologically, residues 1-3 are lumenal; the sequence is MSL. The helical transmembrane segment at 4–23 threads the bilayer; it reads LLTVFLIVFVTQLISWIGQN. At 24–107 the chain is on the cytoplasmic side; the sequence is VLLEWAYNLY…SFSTKFNAVI (84 aa). Residues 72–96 adopt a coiled-coil conformation; it reads AKLRRSVDKGLAELEKLNSEIATAK. Residues 108–128 traverse the membrane as a helical segment; sequence WALTSGVNLVIGWWYGRKAVF. Residues 129–151 lie on the Lumenal side of the membrane; that stretch reads YLPEGWMGPLTWWFSFPFAPRGS. The chain crosses the membrane as a helical span at residues 152–168; that stretch reads VSVGVWSFACKRVLLVL. Residues 169–227 are Cytoplasmic-facing; that stretch reads ERMVKELFFAETQAKEVPVGFSPSSSSSSTPNPMSKASSGSPSPRRRTTVTVESEDEKS. The interval 184–227 is disordered; sequence EVPVGFSPSSSSSSTPNPMSKASSGSPSPRRRTTVTVESEDEKS. Over residues 190 to 211 the composition is skewed to low complexity; sequence SPSSSSSSTPNPMSKASSGSPS.

It belongs to the WRB/GET1 family. As to quaternary structure, interacts with GET3.

The protein resides in the endoplasmic reticulum membrane. Functionally, required for the post-translational delivery of tail-anchored (TA) proteins to the endoplasmic reticulum. Acts as a membrane receptor for soluble GET3, which recognizes and selectively binds the transmembrane domain of TA proteins in the cytosol. This Coprinopsis cinerea (strain Okayama-7 / 130 / ATCC MYA-4618 / FGSC 9003) (Inky cap fungus) protein is Protein GET1.